A 323-amino-acid chain; its full sequence is Iron-sulfur cluster transfer protein NUBPL (323 aa).

65 to 72 (AKGGVGKS) is an ATP binding site.

Belongs to the Mrp/NBP35 ATP-binding proteins family. It depends on [4Fe-4S] cluster as a cofactor.

Its subcellular location is the mitochondrion. Iron-sulfur cluster transfer protein involved in the assembly of the mitochondrial membrane respiratory chain NADH dehydrogenase (Complex I). May deliver one or more Fe-S clusters to complex I subunits. This chain is Iron-sulfur cluster transfer protein NUBPL (nubpl), found in Dictyostelium discoideum (Social amoeba).